A 208-amino-acid polypeptide reads, in one-letter code: Thymidylate kinase (208 aa).

10-17 (GPEGSGKT) contacts ATP.

The protein belongs to the thymidylate kinase family.

The enzyme catalyses dTMP + ATP = dTDP + ADP. Phosphorylation of dTMP to form dTDP in both de novo and salvage pathways of dTTP synthesis. The polypeptide is Thymidylate kinase (Bacillus cereus (strain ATCC 10987 / NRS 248)).